We begin with the raw amino-acid sequence, 44 residues long: Thymosin beta-10 (44 aa).

Basic and acidic residues-rich tracts occupy residues M1–E25 and E33–S44. Positions M1–S44 are disordered. N-acetylalanine is present on A2. K4 carries the post-translational modification N6-acetyllysine. The residue at position 12 (S12) is a Phosphoserine. At K15 the chain carries N6-acetyllysine. Phosphothreonine occurs at positions 21, 23, and 34. K39 carries the N6-acetyllysine modification. Residue S41 is modified to Phosphoserine.

The protein belongs to the thymosin beta family.

It localises to the cytoplasm. Its subcellular location is the cytoskeleton. In terms of biological role, plays an important role in the organization of the cytoskeleton. Binds to and sequesters actin monomers (G actin) and therefore inhibits actin polymerization. The polypeptide is Thymosin beta-10 (Tmsb10) (Rattus norvegicus (Rat)).